We begin with the raw amino-acid sequence, 462 residues long: tRNA modification GTPase MnmE (462 aa).

Positions 27, 89, and 128 each coordinate (6S)-5-formyl-5,6,7,8-tetrahydrofolate. The TrmE-type G domain maps to 224–383 (GLATAIVGRP…LEAQIAKLFF (160 aa)). A K(+)-binding site is contributed by Asn234. GTP is bound by residues 234-239 (NVGKSS), 253-259 (TDVAGTT), and 278-281 (DTAG). Mg(2+) is bound at residue Ser238. K(+) is bound by residues Thr253, Val255, and Thr258. Residue Thr259 participates in Mg(2+) binding. Lys462 lines the (6S)-5-formyl-5,6,7,8-tetrahydrofolate pocket.

Belongs to the TRAFAC class TrmE-Era-EngA-EngB-Septin-like GTPase superfamily. TrmE GTPase family. As to quaternary structure, homodimer. Heterotetramer of two MnmE and two MnmG subunits. The cofactor is K(+).

It localises to the cytoplasm. Functionally, exhibits a very high intrinsic GTPase hydrolysis rate. Involved in the addition of a carboxymethylaminomethyl (cmnm) group at the wobble position (U34) of certain tRNAs, forming tRNA-cmnm(5)s(2)U34. The polypeptide is tRNA modification GTPase MnmE (Latilactobacillus sakei subsp. sakei (strain 23K) (Lactobacillus sakei subsp. sakei)).